Reading from the N-terminus, the 193-residue chain is Superoxide dismutase [Fe] (193 aa).

Fe cation contacts are provided by histidine 27, histidine 75, aspartate 159, and histidine 163.

Belongs to the iron/manganese superoxide dismutase family. As to quaternary structure, homodimer. Requires Fe cation as cofactor.

The catalysed reaction is 2 superoxide + 2 H(+) = H2O2 + O2. Destroys superoxide anion radicals which are normally produced within the cells and which are toxic to biological systems. The sequence is that of Superoxide dismutase [Fe] (sodB) from Bacteroides fragilis (strain YCH46).